Reading from the N-terminus, the 324-residue chain is Serine/threonine-protein phosphatase PP1 isozyme 8 (324 aa).

Mn(2+) contacts are provided by aspartate 66, histidine 68, aspartate 94, and asparagine 126. Catalysis depends on histidine 127, which acts as the Proton donor. Mn(2+)-binding residues include histidine 175 and histidine 250.

It belongs to the PPP phosphatase family. PP-1 subfamily. Mn(2+) is required as a cofactor. In terms of tissue distribution, expressed in roots, rosettes and flowers.

The protein localises to the nucleus. The protein resides in the cytoplasm. The enzyme catalyses O-phospho-L-seryl-[protein] + H2O = L-seryl-[protein] + phosphate. The catalysed reaction is O-phospho-L-threonyl-[protein] + H2O = L-threonyl-[protein] + phosphate. With respect to regulation, phosphatase activity is strongly reduced by the protein phosphatase inhibitor 2 (I-2). Functionally, serine/threonine-protein phosphatase that possesses phosphatase activity toward para-nitrophenyl phosphate (pNPP) in vitro. The sequence is that of Serine/threonine-protein phosphatase PP1 isozyme 8 from Arabidopsis thaliana (Mouse-ear cress).